A 257-amino-acid polypeptide reads, in one-letter code: UPF0246 protein VCM66_2278 (257 aa).

This sequence belongs to the UPF0246 family.

The protein is UPF0246 protein VCM66_2278 of Vibrio cholerae serotype O1 (strain M66-2).